The primary structure comprises 197 residues: Peptide deformylase (197 aa).

Fe cation is bound by residues Cys-106 and His-148. The active site involves Glu-149. His-152 lines the Fe cation pocket.

Belongs to the polypeptide deformylase family. Requires Fe(2+) as cofactor.

It catalyses the reaction N-terminal N-formyl-L-methionyl-[peptide] + H2O = N-terminal L-methionyl-[peptide] + formate. Functionally, removes the formyl group from the N-terminal Met of newly synthesized proteins. Requires at least a dipeptide for an efficient rate of reaction. N-terminal L-methionine is a prerequisite for activity but the enzyme has broad specificity at other positions. The chain is Peptide deformylase from Mycobacteroides abscessus (strain ATCC 19977 / DSM 44196 / CCUG 20993 / CIP 104536 / JCM 13569 / NCTC 13031 / TMC 1543 / L948) (Mycobacterium abscessus).